A 346-amino-acid polypeptide reads, in one-letter code: tRNA N6-adenosine threonylcarbamoyltransferase (346 aa).

Positions 117 and 121 each coordinate Fe cation. Substrate contacts are provided by residues 139-143 (VVSGG), Asp-172, Gly-185, Asp-189, and Asn-278. Asp-307 is a binding site for Fe cation.

It belongs to the KAE1 / TsaD family. May form a heterodimer with TsaB. Fe(2+) is required as a cofactor.

The protein resides in the cytoplasm. It catalyses the reaction L-threonylcarbamoyladenylate + adenosine(37) in tRNA = N(6)-L-threonylcarbamoyladenosine(37) in tRNA + AMP + H(+). Required for the formation of a threonylcarbamoyl group on adenosine at position 37 (t(6)A37) in tRNAs that read codons beginning with adenine. Is involved in the transfer of the threonylcarbamoyl moiety of threonylcarbamoyl-AMP (TC-AMP) to the N6 group of A37, together with TsaE and TsaB; this reaction does not require ATP in vitro. TsaD likely plays a direct catalytic role in this reaction. In Bacillus subtilis (strain 168), this protein is tRNA N6-adenosine threonylcarbamoyltransferase.